The primary structure comprises 105 residues: Ketoisovalerate oxidoreductase subunit VorD (105 aa).

2 4Fe-4S ferredoxin-type domains span residues 44 to 73 and 74 to 103; these read FMPVIDESKCVKCYICWKYCPEPAIYIKED and GFVAIDYDYCKGCGICANECPTKAITMVRE. Residues C53, C56, C59, C63, C83, C86, C89, and C93 each contribute to the [4Fe-4S] cluster site.

In terms of assembly, heterotetramer of one alpha, one beta, one delta and one gamma chain. It depends on [4Fe-4S] cluster as a cofactor.

It carries out the reaction 3-methyl-2-oxobutanoate + 2 oxidized [2Fe-2S]-[ferredoxin] + CoA = 2-methylpropanoyl-CoA + 2 reduced [2Fe-2S]-[ferredoxin] + CO2 + H(+). In Pyrococcus horikoshii (strain ATCC 700860 / DSM 12428 / JCM 9974 / NBRC 100139 / OT-3), this protein is Ketoisovalerate oxidoreductase subunit VorD (vorD).